The chain runs to 141 residues: Ly6/PLAUR domain-containing protein 1 (141 aa).

A signal peptide spans 1–20 (MWVLGIAATFCGLFWLPGLA). 6 cysteine pairs are disulfide-bonded: cysteine 25/cysteine 54, cysteine 28/cysteine 37, cysteine 46/cysteine 71, cysteine 77/cysteine 100, cysteine 88/cysteine 97, and cysteine 101/cysteine 106. Positions 25 to 108 (CYQCEEFQLN…SCCNTPLCNG (84 aa)) constitute a UPAR/Ly6 domain. N-linked (GlcNAc...) asparagine glycosylation is present at asparagine 45. A lipid anchor (GPI-anchor amidated glycine) is attached at glycine 115. The propeptide at 116-141 (SSASAIRPELFTTVLFFNLALCLAHC) is removed in mature form.

In terms of assembly, interacts with CHRNA4 and nAChRs containing alpha-4:beta-2 (CHRNA4:CHRNB2) and alpha-7 (CHRNA7) subunits.

The protein localises to the cell membrane. Believed to act as a modulator of nicotinic acetylcholine receptors (nAChRs) activity. In vitro increases receptor desensitization and decreases affinity for ACh of alpha-4:beta-2-containing nAChRs. May play a role in the intracellular trafficking of alpha-4:beta-2 and alpha-7-containing nAChRs and may inhibit their expression at the cell surface. May be involved in the control of anxiety. The sequence is that of Ly6/PLAUR domain-containing protein 1 (Lypd1) from Rattus norvegicus (Rat).